Consider the following 360-residue polypeptide: Decorin (360 aa).

The N-terminal stretch at M1–A16 is a signal peptide. Positions G17–E30 are excised as a propeptide. S34 carries O-linked (Xyl...) (glycosaminoglycan) serine glycosylation. 2 cysteine pairs are disulfide-bonded: C55-C61 and C59-C68. 12 LRR repeats span residues E74–I94, T95–I118, S119–L142, K143–I163, T164–L187, K188–I213, T214–I234, T235–I258, S259–L282, V283–I305, S306–V335, and Q336–K360. N212 carries an N-linked (GlcNAc...) asparagine glycan. 2 N-linked (GlcNAc...) asparagine glycosylation sites follow: N263 and N304. Cysteines 314 and 347 form a disulfide.

The protein belongs to the small leucine-rich proteoglycan (SLRP) family. SLRP class I subfamily. As to quaternary structure, binds to type I and type II collagen, fibronectin and TGF-beta. Forms a ternary complex with MFAP2 and ELN. Interacts with DPT. Post-translationally, the attached glycosaminoglycan chain can be either chondroitin sulfate or dermatan sulfate depending upon the tissue of origin.

Its subcellular location is the secreted. It localises to the extracellular space. It is found in the extracellular matrix. Its function is as follows. May affect the rate of fibrils formation. The polypeptide is Decorin (DCN) (Ovis aries (Sheep)).